A 335-amino-acid polypeptide reads, in one-letter code: Succinylglutamate desuccinylase (335 aa).

Residues histidine 59, glutamate 62, and histidine 151 each coordinate Zn(2+). Glutamate 215 is a catalytic residue.

It belongs to the AspA/AstE family. Succinylglutamate desuccinylase subfamily. Requires Zn(2+) as cofactor.

It carries out the reaction N-succinyl-L-glutamate + H2O = L-glutamate + succinate. Its pathway is amino-acid degradation; L-arginine degradation via AST pathway; L-glutamate and succinate from L-arginine: step 5/5. Its function is as follows. Transforms N(2)-succinylglutamate into succinate and glutamate. This Pseudomonas syringae pv. tomato (strain ATCC BAA-871 / DC3000) protein is Succinylglutamate desuccinylase.